The primary structure comprises 173 residues: Translation initiation factor IF-3 (173 aa).

Belongs to the IF-3 family. In terms of assembly, monomer.

The protein localises to the cytoplasm. Its function is as follows. IF-3 binds to the 30S ribosomal subunit and shifts the equilibrium between 70S ribosomes and their 50S and 30S subunits in favor of the free subunits, thus enhancing the availability of 30S subunits on which protein synthesis initiation begins. The polypeptide is Translation initiation factor IF-3 (Aromatoleum aromaticum (strain DSM 19018 / LMG 30748 / EbN1) (Azoarcus sp. (strain EbN1))).